Reading from the N-terminus, the 71-residue chain is Small ribosomal subunit protein bS21 (71 aa).

Belongs to the bacterial ribosomal protein bS21 family.

The protein is Small ribosomal subunit protein bS21 of Buchnera aphidicola subsp. Baizongia pistaciae (strain Bp).